Reading from the N-terminus, the 314-residue chain is Mitochondrial MRF1 N(5)-glutamine methyltransferase MTQ1 (314 aa).

S-adenosyl-L-methionine-binding positions include 118–122 (FTGTG), aspartate 141, and asparagine 188. A substrate-binding site is contributed by 188–191 (NPPY).

This sequence belongs to the protein N5-glutamine methyltransferase family.

The protein resides in the mitochondrion. It catalyses the reaction L-glutaminyl-[peptide chain release factor] + S-adenosyl-L-methionine = N(5)-methyl-L-glutaminyl-[peptide chain release factor] + S-adenosyl-L-homocysteine + H(+). In terms of biological role, methylates MRF1 on 'Gln-287' using S-adenosyl L-methionine as methyl donor. The protein is Mitochondrial MRF1 N(5)-glutamine methyltransferase MTQ1 (MTQ1) of Saccharomyces cerevisiae (strain ATCC 204508 / S288c) (Baker's yeast).